Here is a 308-residue protein sequence, read N- to C-terminus: Cell division protein FtsQ (308 aa).

Residues 1–53 (MDSGGRIVYALNVEKTGFLRILSVTVLQRLYRRVFWFLFKCVAGIDVPRHAGS) lie on the Cytoplasmic side of the membrane. Residues 54–74 (LAVFSFFFLSILYSISSGGYM) traverse the membrane as a helical segment. The Periplasmic segment spans residues 75–308 (NHFMKVAISN…LLKMLKAGSV (234 aa)). The POTRA domain occupies 87–155 (FLVTHVDMSG…DRLRISLVER (69 aa)).

The protein belongs to the FtsQ/DivIB family. FtsQ subfamily.

The protein resides in the cell inner membrane. In terms of biological role, essential cell division protein. The polypeptide is Cell division protein FtsQ (Bartonella bacilliformis).